A 431-amino-acid polypeptide reads, in one-letter code: Histidinol dehydrogenase (431 aa).

NAD(+) is bound by residues Tyr124, Gln187, and Asn210. Substrate is bound by residues Ser236, Gln258, and His261. Residues Gln258 and His261 each contribute to the Zn(2+) site. Residues Glu325 and His326 each act as proton acceptor in the active site. Substrate contacts are provided by His326, Asp359, Glu413, and His418. Zn(2+) is bound at residue Asp359. Zn(2+) is bound at residue His418.

It belongs to the histidinol dehydrogenase family. Zn(2+) serves as cofactor.

It catalyses the reaction L-histidinol + 2 NAD(+) + H2O = L-histidine + 2 NADH + 3 H(+). Its pathway is amino-acid biosynthesis; L-histidine biosynthesis; L-histidine from 5-phospho-alpha-D-ribose 1-diphosphate: step 9/9. Catalyzes the sequential NAD-dependent oxidations of L-histidinol to L-histidinaldehyde and then to L-histidine. The polypeptide is Histidinol dehydrogenase (Legionella pneumophila (strain Paris)).